Reading from the N-terminus, the 218-residue chain is Protein-L-isoaspartate O-methyltransferase (218 aa).

S66 is a catalytic residue.

It belongs to the methyltransferase superfamily. L-isoaspartyl/D-aspartyl protein methyltransferase family.

The protein localises to the cytoplasm. The catalysed reaction is [protein]-L-isoaspartate + S-adenosyl-L-methionine = [protein]-L-isoaspartate alpha-methyl ester + S-adenosyl-L-homocysteine. In terms of biological role, catalyzes the methyl esterification of L-isoaspartyl residues in peptides and proteins that result from spontaneous decomposition of normal L-aspartyl and L-asparaginyl residues. It plays a role in the repair and/or degradation of damaged proteins. The sequence is that of Protein-L-isoaspartate O-methyltransferase from Caulobacter sp. (strain K31).